The following is a 217-amino-acid chain: UPF0502 protein ASA_1460 (217 aa).

Belongs to the UPF0502 family.

The sequence is that of UPF0502 protein ASA_1460 from Aeromonas salmonicida (strain A449).